The following is a 284-amino-acid chain: 2-dehydro-3-deoxyphosphooctonate aldolase (284 aa).

The protein belongs to the KdsA family.

It localises to the cytoplasm. The catalysed reaction is D-arabinose 5-phosphate + phosphoenolpyruvate + H2O = 3-deoxy-alpha-D-manno-2-octulosonate-8-phosphate + phosphate. Its pathway is carbohydrate biosynthesis; 3-deoxy-D-manno-octulosonate biosynthesis; 3-deoxy-D-manno-octulosonate from D-ribulose 5-phosphate: step 2/3. The protein operates within bacterial outer membrane biogenesis; lipopolysaccharide biosynthesis. This chain is 2-dehydro-3-deoxyphosphooctonate aldolase, found in Salmonella paratyphi A (strain ATCC 9150 / SARB42).